Here is a 272-residue protein sequence, read N- to C-terminus: ATP phosphoribosyltransferase regulatory subunit (272 aa).

This sequence belongs to the class-II aminoacyl-tRNA synthetase family. HisZ subfamily. As to quaternary structure, heteromultimer composed of HisG and HisZ subunits.

It localises to the cytoplasm. It functions in the pathway amino-acid biosynthesis; L-histidine biosynthesis; L-histidine from 5-phospho-alpha-D-ribose 1-diphosphate: step 1/9. In terms of biological role, required for the first step of histidine biosynthesis. May allow the feedback regulation of ATP phosphoribosyltransferase activity by histidine. This Staphylococcus aureus (strain bovine RF122 / ET3-1) protein is ATP phosphoribosyltransferase regulatory subunit.